Consider the following 323-residue polypeptide: Ribose-phosphate pyrophosphokinase (323 aa).

ATP is bound by residues 38-40 (DGE) and 96-97 (RQ). 2 residues coordinate Mg(2+): His-130 and Asp-170. Lys-193 is an active-site residue. D-ribose 5-phosphate contacts are provided by residues Arg-195, Asp-219, and 223 to 227 (DTAGT).

It belongs to the ribose-phosphate pyrophosphokinase family. Class I subfamily. Homohexamer. It depends on Mg(2+) as a cofactor.

It is found in the cytoplasm. The catalysed reaction is D-ribose 5-phosphate + ATP = 5-phospho-alpha-D-ribose 1-diphosphate + AMP + H(+). Its pathway is metabolic intermediate biosynthesis; 5-phospho-alpha-D-ribose 1-diphosphate biosynthesis; 5-phospho-alpha-D-ribose 1-diphosphate from D-ribose 5-phosphate (route I): step 1/1. Involved in the biosynthesis of the central metabolite phospho-alpha-D-ribosyl-1-pyrophosphate (PRPP) via the transfer of pyrophosphoryl group from ATP to 1-hydroxyl of ribose-5-phosphate (Rib-5-P). This is Ribose-phosphate pyrophosphokinase from Chlorobaculum tepidum (strain ATCC 49652 / DSM 12025 / NBRC 103806 / TLS) (Chlorobium tepidum).